The following is a 549-amino-acid chain: Probable protein kinase UbiB (549 aa).

The region spanning 123 to 501 is the Protein kinase domain; the sequence is DFNDTPLASA…QQKSHKSNYL (379 aa). ATP contacts are provided by residues 129–137 and lysine 152; that span reads LASASISQV. Aspartate 287 serves as the catalytic Proton acceptor. Helical transmembrane passes span 498–518 and 519–539; these read SNYL…LFTQ and IVTL…WAIG.

The protein belongs to the ABC1 family. UbiB subfamily.

It localises to the cell inner membrane. It participates in cofactor biosynthesis; ubiquinone biosynthesis [regulation]. Its function is as follows. Is probably a protein kinase regulator of UbiI activity which is involved in aerobic coenzyme Q (ubiquinone) biosynthesis. The chain is Probable protein kinase UbiB from Shewanella frigidimarina (strain NCIMB 400).